The primary structure comprises 118 residues: Large ribosomal subunit protein uL18 (118 aa).

This sequence belongs to the universal ribosomal protein uL18 family. As to quaternary structure, part of the 50S ribosomal subunit; part of the 5S rRNA/L5/L18/L25 subcomplex. Contacts the 5S and 23S rRNAs.

Functionally, this is one of the proteins that bind and probably mediate the attachment of the 5S RNA into the large ribosomal subunit, where it forms part of the central protuberance. The polypeptide is Large ribosomal subunit protein uL18 (Phenylobacterium zucineum (strain HLK1)).